Here is a 302-residue protein sequence, read N- to C-terminus: N-acetylmuramic acid 6-phosphate etherase (302 aa).

The 164-residue stretch at 58–221 (IGKAFLNGGR…STGAMVKTGK (164 aa)) folds into the SIS domain. E86 acts as the Proton donor in catalysis. E117 is an active-site residue.

Belongs to the GCKR-like family. MurNAc-6-P etherase subfamily. As to quaternary structure, homodimer.

The catalysed reaction is N-acetyl-D-muramate 6-phosphate + H2O = N-acetyl-D-glucosamine 6-phosphate + (R)-lactate. Its pathway is amino-sugar metabolism; N-acetylmuramate degradation. Specifically catalyzes the cleavage of the D-lactyl ether substituent of MurNAc 6-phosphate, producing GlcNAc 6-phosphate and D-lactate. This chain is N-acetylmuramic acid 6-phosphate etherase, found in Clostridium botulinum (strain Loch Maree / Type A3).